An 885-amino-acid chain; its full sequence is DNA mismatch repair protein MutS (885 aa).

An ATP-binding site is contributed by G626–S633.

Belongs to the DNA mismatch repair MutS family.

Functionally, this protein is involved in the repair of mismatches in DNA. It is possible that it carries out the mismatch recognition step. This protein has a weak ATPase activity. This is DNA mismatch repair protein MutS from Burkholderia ambifaria (strain MC40-6).